The chain runs to 239 residues: Homeobox-leucine zipper protein HOX12 (239 aa).

Positions 22–65 are disordered; it reads PEAATSGGEQKKARQRRRRKVKPEAAAALAGESGGDEQAKKRRL. A DNA-binding region (homeobox) is located at residues 58–117; the sequence is EQAKKRRLSDEQARFLEMSFKKERKLETPRKVQLAAELGLDAKQVAVWFQNRRARHKSKL. A coiled-coil region spans residues 107-168; sequence QNRRARHKSK…KLAAVAAATT (62 aa).

It belongs to the HD-ZIP homeobox family. Class I subfamily. As to expression, expressed in seedlings, roots, stems, leaf sheaths and panicles.

The protein resides in the nucleus. In terms of biological role, probable transcription factor. This is Homeobox-leucine zipper protein HOX12 (HOX12) from Oryza sativa subsp. indica (Rice).